The chain runs to 1102 residues: Probable leucine-rich repeat receptor-like protein kinase At5g63930 (1102 aa).

The signal sequence occupies residues 1-26 (MVKEMMKLAVFFISLLLILLISETTG). The Extracellular segment spans residues 27–737 (LNLEGQYLLE…GKPGGMRSSK (711 aa)). 4 N-linked (GlcNAc...) asparagine glycosylation sites follow: N54, N68, N79, and N119. LRR repeat units follow at residues 72–96 (DPEV…IGGL), 97–120 (VHLK…IGNC), 122–144 (SLEI…IGKL), 145–170 (VSLE…NLLS), 172–192 (SQLV…IGNL), 193–216 (KRLT…IGGC), 217–241 (ESLV…GMLK), 243–264 (LSQV…ISNC), 265–288 (TSLE…LGDL), 289–312 (QSLE…IGNL), 314–336 (YAIE…LGNI), 337–360 (EGLE…LSTL), 361–383 (KNLS…GFQY), 385–408 (RGLF…LGWY), 409–432 (SDLW…LCLH), 433–456 (SNMI…ITTC), 458–480 (TLVQ…LCKQ), 481–504 (VNVT…VGNC), 505–528 (SALQ…IGML), 529–552 (SQLG…IFNC), 554–576 (MLQR…VGSL), 577–602 (YQLE…NLSR), 604–624 (TELQ…LGSL), 625–649 (TGLQ…LSNL), 651–672 (MLEF…SFAN), and 674–700 (SSLL…SMSS). N180 is a glycosylation site (N-linked (GlcNAc...) asparagine). N263 carries N-linked (GlcNAc...) asparagine glycosylation. Residues N302 and N311 are each glycosylated (N-linked (GlcNAc...) asparagine). Residue N362 is glycosylated (N-linked (GlcNAc...) asparagine). Residue N444 is glycosylated (N-linked (GlcNAc...) asparagine). N-linked (GlcNAc...) asparagine glycosylation is found at N482 and N503. N-linked (GlcNAc...) asparagine glycans are attached at residues N535, N564, N588, N599, N614, N632, N661, N672, N680, and N695. A helical membrane pass occupies residues 738 to 758 (IIAITAAVIGGVSLMLIALIV). Over 759-1102 (YLMRRPVRTV…TEELTQTTTP (344 aa)) the chain is Cytoplasmic. Phosphothreonine is present on residues T793 and T801. Residues 804–1091 (FDESFVVGRG…ERSEGEQEHL (288 aa)) form the Protein kinase domain. ATP contacts are provided by residues 810–818 (VGRGACGTV) and K832. Residues Y882 and Y919 each carry the phosphotyrosine modification. Residue D932 is the Proton acceptor of the active site. At S966 the chain carries Phosphoserine. Residues Y974 and Y981 each carry the phosphotyrosine modification. A Phosphothreonine modification is found at T982.

It belongs to the protein kinase superfamily. Ser/Thr protein kinase family.

Its subcellular location is the cell membrane. It carries out the reaction L-seryl-[protein] + ATP = O-phospho-L-seryl-[protein] + ADP + H(+). The catalysed reaction is L-threonyl-[protein] + ATP = O-phospho-L-threonyl-[protein] + ADP + H(+). The sequence is that of Probable leucine-rich repeat receptor-like protein kinase At5g63930 from Arabidopsis thaliana (Mouse-ear cress).